Here is a 223-residue protein sequence, read N- to C-terminus: MSQNDLNKEKALVVFSGGQDSTTCLFYAKKHFKEVELVTFNYGQRHDKEIEVAKKIAKEQNLKHHILDMSLLSQLTPNALTQHELSIEDNDDGIPNTFVPARNLLFLSFAGALAYQIHAKHIITGVCETDFSGYPDCRDSFIKSMNVTLSLSMDKDFVIHTPLMWLDKAQTWALSDKLGVLDYIRHNTLTCYNGIIGDGCGECPACHLRARGLKHYLEHKGEE.

An ATP-binding site is contributed by 15–25 (FSGGQDSTTCL). Positions 191, 200, 203, and 206 each coordinate Zn(2+).

Belongs to the QueC family. Homodimer. Zn(2+) is required as a cofactor.

The enzyme catalyses 7-carboxy-7-deazaguanine + NH4(+) + ATP = 7-cyano-7-deazaguanine + ADP + phosphate + H2O + H(+). It participates in purine metabolism; 7-cyano-7-deazaguanine biosynthesis. Functionally, catalyzes the ATP-dependent conversion of 7-carboxy-7-deazaguanine (CDG) to 7-cyano-7-deazaguanine (preQ(0)). The sequence is that of 7-cyano-7-deazaguanine synthase from Staphylococcus epidermidis (strain ATCC 35984 / DSM 28319 / BCRC 17069 / CCUG 31568 / BM 3577 / RP62A).